The sequence spans 126 residues: Small ribosomal subunit protein uS11 (126 aa).

Belongs to the universal ribosomal protein uS11 family. Part of the 30S ribosomal subunit.

Functionally, located on the platform of the 30S subunit. In Methanosarcina barkeri (strain Fusaro / DSM 804), this protein is Small ribosomal subunit protein uS11.